The sequence spans 189 residues: Peptidyl-tRNA hydrolase (189 aa).

His-14 is a binding site for tRNA. His-19 functions as the Proton acceptor in the catalytic mechanism. Tyr-64, Asn-66, and Asn-112 together coordinate tRNA.

It belongs to the PTH family. Monomer.

The protein localises to the cytoplasm. It carries out the reaction an N-acyl-L-alpha-aminoacyl-tRNA + H2O = an N-acyl-L-amino acid + a tRNA + H(+). Its function is as follows. Hydrolyzes ribosome-free peptidyl-tRNAs (with 1 or more amino acids incorporated), which drop off the ribosome during protein synthesis, or as a result of ribosome stalling. Catalyzes the release of premature peptidyl moieties from peptidyl-tRNA molecules trapped in stalled 50S ribosomal subunits, and thus maintains levels of free tRNAs and 50S ribosomes. In Chlorobium phaeobacteroides (strain BS1), this protein is Peptidyl-tRNA hydrolase.